Here is a 227-residue protein sequence, read N- to C-terminus: Uridylate kinase (227 aa).

An ATP-binding site is contributed by 6 to 10 (KVSGK). Gly43 contacts UMP. 2 residues coordinate ATP: Gly44 and Arg48. UMP contacts are provided by residues Asp65 and 113–119 (FQPGQST). Residues Thr139, Asn140, Tyr145, and Asp148 each coordinate ATP.

The protein belongs to the UMP kinase family. As to quaternary structure, homohexamer.

The protein localises to the cytoplasm. The catalysed reaction is UMP + ATP = UDP + ADP. It functions in the pathway pyrimidine metabolism; CTP biosynthesis via de novo pathway; UDP from UMP (UMPK route): step 1/1. With respect to regulation, inhibited by UTP. Functionally, catalyzes the reversible phosphorylation of UMP to UDP. This chain is Uridylate kinase, found in Sulfolobus acidocaldarius (strain ATCC 33909 / DSM 639 / JCM 8929 / NBRC 15157 / NCIMB 11770).